The primary structure comprises 172 residues: NAD(P)H-quinone oxidoreductase subunit I, chloroplastic (172 aa).

4Fe-4S ferredoxin-type domains lie at 55 to 84 and 95 to 124; these read GRIHFEFDKCIACEVCVRVCPIDLPVVDWK and LNYSIDFGICIFCGNCVEYCPTNCLSMTEE. Residues Cys64, Cys67, Cys70, Cys74, Cys104, Cys107, Cys110, and Cys114 each coordinate [4Fe-4S] cluster.

This sequence belongs to the complex I 23 kDa subunit family. NDH is composed of at least 16 different subunits, 5 of which are encoded in the nucleus. It depends on [4Fe-4S] cluster as a cofactor.

The protein localises to the plastid. It is found in the chloroplast thylakoid membrane. The enzyme catalyses a plastoquinone + NADH + (n+1) H(+)(in) = a plastoquinol + NAD(+) + n H(+)(out). It carries out the reaction a plastoquinone + NADPH + (n+1) H(+)(in) = a plastoquinol + NADP(+) + n H(+)(out). Functionally, NDH shuttles electrons from NAD(P)H:plastoquinone, via FMN and iron-sulfur (Fe-S) centers, to quinones in the photosynthetic chain and possibly in a chloroplast respiratory chain. The immediate electron acceptor for the enzyme in this species is believed to be plastoquinone. Couples the redox reaction to proton translocation, and thus conserves the redox energy in a proton gradient. The sequence is that of NAD(P)H-quinone oxidoreductase subunit I, chloroplastic from Capsella bursa-pastoris (Shepherd's purse).